The sequence spans 334 residues: N-acetylmuramoyl-L-alanine amidase sle1 (334 aa).

A signal peptide spans Met1 to Ala25. The region spanning Thr27–Val70 is the LysM 1 domain. Residues Ser71–Asn86 are compositionally biased toward low complexity. The tract at residues Ser71–Gly90 is disordered. The LysM 2 domain maps to Ser91–Val134. Residues Thr137–Gly156 form a disordered region. Residues Ser158 to Val201 enclose the LysM 3 domain. Residues Gly210 to His334 form the Peptidase C51 domain.

It is found in the secreted. Its subcellular location is the cell surface. The catalysed reaction is Hydrolyzes the link between N-acetylmuramoyl residues and L-amino acid residues in certain cell-wall glycopeptides.. Its function is as follows. Peptidoglycan hydrolase involved in the splitting of the septum during cell division. The chain is N-acetylmuramoyl-L-alanine amidase sle1 (sle1) from Staphylococcus aureus (strain MRSA252).